The primary structure comprises 77 residues: Small nuclear ribonucleoprotein G (77 aa).

In terms of domain architecture, Sm spans 2–77 (VSTPELKKYM…IISLEALDAI (76 aa)).

It belongs to the snRNP Sm proteins family. Component of the Sm core complex, present in spliceosomal snRNP U1, U2, U4/U6 and U5. The core complex contains SMB1, SMD1, SMD2, SMD3, SME1, SMX3 and SMX2 (Sm proteins B, D1, D2, D3, E, F and G, respectively), and is probably a heptameric ring structure. SMX2 specifically interacts with SME1. Belongs to the CWC complex (or CEF1-associated complex), a spliceosome sub-complex reminiscent of a late-stage spliceosome composed of the U2, U5 and U6 snRNAs and at least BUD13, BUD31, BRR2, CDC40, CEF1, CLF1, CUS1, CWC2, CWC15, CWC21, CWC22, CWC23, CWC24, CWC25, CWC27, ECM2, HSH155, IST3, ISY1, LEA1, MSL1, NTC20, PRP8, PRP9, PRP11, PRP19, PRP21, PRP22, PRP45, PRP46, SLU7, SMB1, SMD1, SMD2, SMD3, SMX2, SMX3, SNT309, SNU114, SPP2, SYF1, SYF2, RSE1 and YJU2. Component of the U4/U6-U5 tri-snRNP complex composed of the U4, U6 and U5 snRNAs and at least PRP3, PRP4, PRP6, PRP8, PRP18, PRP31, PRP38, SNU13, SNU23, SNU66, SNU114, SPP381, SMB1, SMD1, SMD2, SMD3, SMX2, SMX3, LSM2, LSM3, LSM4, LSM5, LSM6, LSM7, LSM8, BRR2 and DIB1.

The protein resides in the nucleus. It localises to the cytoplasm. Plays a role in pre-mRNA splicing as a core component of the spliceosomal U1, U2, U4 and U5 small nuclear ribonucleoproteins (snRNPs), the building blocks of the spliceosome. The polypeptide is Small nuclear ribonucleoprotein G (SMX2) (Saccharomyces cerevisiae (strain ATCC 204508 / S288c) (Baker's yeast)).